A 301-amino-acid polypeptide reads, in one-letter code: GTP cyclohydrolase FolE2 (301 aa).

It belongs to the GTP cyclohydrolase IV family.

It carries out the reaction GTP + H2O = 7,8-dihydroneopterin 3'-triphosphate + formate + H(+). Its pathway is cofactor biosynthesis; 7,8-dihydroneopterin triphosphate biosynthesis; 7,8-dihydroneopterin triphosphate from GTP: step 1/1. Functionally, converts GTP to 7,8-dihydroneopterin triphosphate. In Pseudomonas savastanoi pv. phaseolicola (strain 1448A / Race 6) (Pseudomonas syringae pv. phaseolicola (strain 1448A / Race 6)), this protein is GTP cyclohydrolase FolE2.